Reading from the N-terminus, the 199-residue chain is GTP cyclohydrolase-2 (199 aa).

Residue 49-53 coordinates GTP; that stretch reads RIHSE. Zn(2+) contacts are provided by C54, C65, and C67. Residues Q70, 92-94, and T114 each bind GTP; that span reads EGR. The active-site Proton acceptor is the D126. Residue R128 is the Nucleophile of the active site. GTP-binding residues include T149 and K154.

It belongs to the GTP cyclohydrolase II family. Homodimer. It depends on Zn(2+) as a cofactor.

It catalyses the reaction GTP + 4 H2O = 2,5-diamino-6-hydroxy-4-(5-phosphoribosylamino)-pyrimidine + formate + 2 phosphate + 3 H(+). The protein operates within cofactor biosynthesis; riboflavin biosynthesis; 5-amino-6-(D-ribitylamino)uracil from GTP: step 1/4. Catalyzes the conversion of GTP to 2,5-diamino-6-ribosylamino-4(3H)-pyrimidinone 5'-phosphate (DARP), formate and pyrophosphate. This chain is GTP cyclohydrolase-2, found in Proteus mirabilis (strain HI4320).